A 180-amino-acid chain; its full sequence is Cytochrome b6-f complex iron-sulfur subunit (180 aa).

Residues 21 to 43 (LLTFGTITGTALGALYPVVKYFI) traverse the membrane as a helical segment. Positions 66–162 (VSEYLAKHLP…ATVTEDDKLV (97 aa)) constitute a Rieske domain. 4 residues coordinate [2Fe-2S] cluster: cysteine 108, histidine 110, cysteine 126, and histidine 129. A disulfide bridge links cysteine 113 with cysteine 128.

Belongs to the Rieske iron-sulfur protein family. In terms of assembly, the 4 large subunits of the cytochrome b6-f complex are cytochrome b6, subunit IV (17 kDa polypeptide, PetD), cytochrome f and the Rieske protein, while the 4 small subunits are PetG, PetL, PetM and PetN. The complex functions as a dimer. Requires [2Fe-2S] cluster as cofactor.

The protein localises to the cellular thylakoid membrane. It carries out the reaction 2 oxidized [plastocyanin] + a plastoquinol + 2 H(+)(in) = 2 reduced [plastocyanin] + a plastoquinone + 4 H(+)(out). Its function is as follows. Component of the cytochrome b6-f complex, which mediates electron transfer between photosystem II (PSII) and photosystem I (PSI), cyclic electron flow around PSI, and state transitions. The sequence is that of Cytochrome b6-f complex iron-sulfur subunit from Thermosynechococcus vestitus (strain NIES-2133 / IAM M-273 / BP-1).